The primary structure comprises 404 residues: MKLPIYLDYSATCPVDPRVAEKMMQCLTMDGLFGNPASRSHRFGWQAEEAVDLARNQVAELLGADPREIVFTSGATESNNLAIKGVAHFYAGKGKHIITSKTEHKAVLDTCRQLEREGYEVTYLEPMPNGLFTLEQIEGALRDDTILVSIMHVNNEIGVVQNIAAIGELCRSRKILLHVDAVQSVGKIPVDVEALKVDLLSVSAHKVYGPKGIGALFVRRKPRVRLEAQMHGGGHERGMRSGTLPTHQIVGMGEAFRIAKEEMASEGQHIMALRQRLWDGIKDIEAVYINGDLEQRVPGNLNVSFAYVEGESLIMALKDLAVSSGSACTSASLEPSYVLRALGLNDELAHSSIRFSLGRFTTEEEIDYAIKLIRDSIGRLREMSPLWEMYKDGVDLNTVEWAHH.

Pyridoxal 5'-phosphate is bound by residues 75-76 (AT), Asn-155, Gln-183, and 203-205 (SAH). Residue Lys-206 is modified to N6-(pyridoxal phosphate)lysine. Thr-243 contacts pyridoxal 5'-phosphate. Cys-328 serves as the catalytic Cysteine persulfide intermediate. Cys-328 contacts [2Fe-2S] cluster.

Belongs to the class-V pyridoxal-phosphate-dependent aminotransferase family. NifS/IscS subfamily. In terms of assembly, homodimer. Forms a heterotetramer with IscU, interacts with other sulfur acceptors. Pyridoxal 5'-phosphate serves as cofactor.

It localises to the cytoplasm. The catalysed reaction is (sulfur carrier)-H + L-cysteine = (sulfur carrier)-SH + L-alanine. It participates in cofactor biosynthesis; iron-sulfur cluster biosynthesis. In terms of biological role, master enzyme that delivers sulfur to a number of partners involved in Fe-S cluster assembly, tRNA modification or cofactor biosynthesis. Catalyzes the removal of elemental sulfur atoms from cysteine to produce alanine. Functions as a sulfur delivery protein for Fe-S cluster synthesis onto IscU, an Fe-S scaffold assembly protein, as well as other S acceptor proteins. The protein is Cysteine desulfurase IscS of Aeromonas salmonicida (strain A449).